The chain runs to 310 residues: Manganese ABC transporter substrate-binding lipoprotein PsaA (310 aa).

The first 20 residues, Met-1–Ala-20, serve as a signal peptide directing secretion. The N-palmitoyl cysteine moiety is linked to residue Cys-21. Residue Cys-21 is the site of S-diacylglycerol cysteine attachment. His-68, His-140, Glu-206, and Asp-281 together coordinate Mn(2+).

The protein belongs to the bacterial solute-binding protein 9 family. Lipoprotein receptor antigen (Lrai) subfamily.

The protein resides in the cell membrane. Part of the ATP-binding cassette (ABC) transport system PsaABC involved in manganese import. Binds manganese with high affinity and specificity and delivers it to the membrane permease for translocation into the cytoplasm. Also acts as an adhesin which is involved on adherence to extracellular matrix. In Streptococcus pneumoniae, this protein is Manganese ABC transporter substrate-binding lipoprotein PsaA.